Here is a 393-residue protein sequence, read N- to C-terminus: Probable acetyl-CoA acyltransferase (393 aa).

Residue cysteine 88 is the Acyl-thioester intermediate of the active site. Residues histidine 349 and cysteine 378 each act as proton acceptor in the active site.

Belongs to the thiolase-like superfamily. Thiolase family.

The protein localises to the cytoplasm. It catalyses the reaction 2 acetyl-CoA = acetoacetyl-CoA + CoA. The sequence is that of Probable acetyl-CoA acyltransferase from Staphylococcus aureus (strain COL).